The sequence spans 309 residues: tRNA pseudouridine synthase B (309 aa).

Aspartate 52 acts as the Nucleophile in catalysis.

The protein belongs to the pseudouridine synthase TruB family. Type 1 subfamily.

The catalysed reaction is uridine(55) in tRNA = pseudouridine(55) in tRNA. In terms of biological role, responsible for synthesis of pseudouridine from uracil-55 in the psi GC loop of transfer RNAs. The protein is tRNA pseudouridine synthase B of Leptospira interrogans serogroup Icterohaemorrhagiae serovar Lai (strain 56601).